The chain runs to 210 residues: Tumor protein D53 homolog (210 aa).

Positions 22–73 (VTDVDFTSMISEEEKEELKAELAKLEDEISTLRQVLAAKEKHLIEIKQKLGM) form a coiled coil. The span at 185 to 197 (SSTAHASAQSSLA) shows a compositional bias: polar residues. Positions 185–210 (SSTAHASAQSSLAGTRLPESEEELQC) are disordered.

The protein belongs to the TPD52 family. Forms a homodimer or heterodimer with other members of the family.

The protein is Tumor protein D53 homolog (TPD52L1) of Gallus gallus (Chicken).